A 164-amino-acid chain; its full sequence is Lectin (164 aa).

A signal peptide spans 1–15 (TVATILTILASTCMA). Residues 16–125 (RNVLVNNEGL…DIWSTGTYRK (110 aa)) form the Bulb-type lectin domain. Residues Cys-44 and Cys-68 are joined by a disulfide bond.

Homotetramer. Post-translationally, not glycosylated.

Its function is as follows. Mannose-specific lectin. Induces a Th1-type immune response in vitro. Causes a 4-fold increase in the proliferation of murine thymocytes and a significant increase in the production of nitric oxide at 24 hours in a macrophage cell line. Stimulates the production of the pro-inflammatory cytokines TNF and IL12 by rat peritoneal macrophages in a dose-dependent manner and of the cytokines IFNG and IL2 in murine thymocytes. Has hemagglutination activity towards rabbit erythrocytes. This Allium cepa (Onion) protein is Lectin.